Reading from the N-terminus, the 209-residue chain is Uridine kinase (209 aa).

Residue 12 to 19 (GGSGGGKT) coordinates ATP.

Belongs to the uridine kinase family.

Its subcellular location is the cytoplasm. The enzyme catalyses uridine + ATP = UMP + ADP + H(+). It carries out the reaction cytidine + ATP = CMP + ADP + H(+). It functions in the pathway pyrimidine metabolism; CTP biosynthesis via salvage pathway; CTP from cytidine: step 1/3. Its pathway is pyrimidine metabolism; UMP biosynthesis via salvage pathway; UMP from uridine: step 1/1. The protein is Uridine kinase of Streptococcus agalactiae serotype V (strain ATCC BAA-611 / 2603 V/R).